Here is a 128-residue protein sequence, read N- to C-terminus: uncharacterized protein (128 aa).

The protein to M.jannaschii MJ0766.

This is an uncharacterized protein from Methanocaldococcus jannaschii (strain ATCC 43067 / DSM 2661 / JAL-1 / JCM 10045 / NBRC 100440) (Methanococcus jannaschii).